The sequence spans 365 residues: Flagellar P-ring protein (365 aa).

The first 22 residues, 1–22 (MSVRRFLVWILALTVGAAPVMA), serve as a signal peptide directing secretion.

Belongs to the FlgI family. In terms of assembly, the basal body constitutes a major portion of the flagellar organelle and consists of four rings (L,P,S, and M) mounted on a central rod.

It localises to the periplasm. The protein localises to the bacterial flagellum basal body. Assembles around the rod to form the L-ring and probably protects the motor/basal body from shearing forces during rotation. The chain is Flagellar P-ring protein from Marinobacter nauticus (strain ATCC 700491 / DSM 11845 / VT8) (Marinobacter aquaeolei).